The sequence spans 196 residues: Hypoxanthine/guanine phosphoribosyltransferase (196 aa).

It belongs to the purine/pyrimidine phosphoribosyltransferase family. Archaeal HPRT subfamily. In terms of assembly, homodimer.

The protein resides in the cytoplasm. It carries out the reaction IMP + diphosphate = hypoxanthine + 5-phospho-alpha-D-ribose 1-diphosphate. The catalysed reaction is GMP + diphosphate = guanine + 5-phospho-alpha-D-ribose 1-diphosphate. Its pathway is purine metabolism; IMP biosynthesis via salvage pathway; IMP from hypoxanthine: step 1/1. Its function is as follows. Catalyzes a salvage reaction resulting in the formation of IMP that is energically less costly than de novo synthesis. The sequence is that of Hypoxanthine/guanine phosphoribosyltransferase from Methanocaldococcus sp. (strain FS406-22).